The primary structure comprises 346 residues: DNA-directed RNA polymerase subunit alpha (346 aa).

The tract at residues 1-233 (MLRDEVAVSA…DLFIPFLHAE (233 aa)) is alpha N-terminal domain (alpha-NTD). The alpha C-terminal domain (alpha-CTD) stretch occupies residues 268-346 (IELKCIFIDQ…NKFLIGNPSE (79 aa)).

It belongs to the RNA polymerase alpha chain family. In terms of assembly, in plastids the minimal PEP RNA polymerase catalytic core is composed of four subunits: alpha, beta, beta', and beta''. When a (nuclear-encoded) sigma factor is associated with the core the holoenzyme is formed, which can initiate transcription.

The protein localises to the plastid. The protein resides in the chloroplast. The catalysed reaction is RNA(n) + a ribonucleoside 5'-triphosphate = RNA(n+1) + diphosphate. In terms of biological role, DNA-dependent RNA polymerase catalyzes the transcription of DNA into RNA using the four ribonucleoside triphosphates as substrates. The sequence is that of DNA-directed RNA polymerase subunit alpha from Ranunculus macranthus (Large buttercup).